The primary structure comprises 201 residues: MSIKNLPADYLLAAQQGDIDKVKTCLALGVDINTCDRQGKTAITLASLYQQYACVQALIDAGADINKQDHTCLNPFLISCLNDDLTLLRIILPAKPDLNCVTRFGGVGLTPACEKGHLSIVKELLAHTEINVNQTNHVGWTPLLEAIVLNDGGIKQQAIVQLLLEHGASPHLTDKYGKTPLELARERGFEEIAQLLIAAGA.

6 ANK repeats span residues 5–34 (NLPA…DINT), 38–67 (QGKT…DINK), 71–100 (TCLN…DLNC), 104–134 (FGGV…NVNQ), 138–172 (VGWT…SPHL), and 176–201 (YGKT…AAGA).

The chain is Putative ankyrin repeat protein YahD (yahD) from Escherichia coli (strain K12).